The sequence spans 246 residues: NAD-dependent protein deacylase (246 aa).

One can recognise a Deacetylase sirtuin-type domain in the interval 1 to 245; sequence MKEFITKHRD…ELIREILDNP (245 aa). 20 to 39 is an NAD(+) binding site; sequence GAGISAESGIPTFRGSEGLW. Substrate is bound by residues Y64 and R67. 98–101 lines the NAD(+) pocket; it reads QNVD. Residue H116 is the Proton acceptor of the active site. Zn(2+)-binding residues include C124, C127, C146, and C149. NAD(+)-binding positions include 186-188, 212-214, and T230; these read GTS and NPE.

Belongs to the sirtuin family. Class III subfamily. Zn(2+) is required as a cofactor.

It localises to the cytoplasm. The enzyme catalyses N(6)-acetyl-L-lysyl-[protein] + NAD(+) + H2O = 2''-O-acetyl-ADP-D-ribose + nicotinamide + L-lysyl-[protein]. It carries out the reaction N(6)-succinyl-L-lysyl-[protein] + NAD(+) + H2O = 2''-O-succinyl-ADP-D-ribose + nicotinamide + L-lysyl-[protein]. Functionally, NAD-dependent lysine deacetylase and desuccinylase that specifically removes acetyl and succinyl groups on target proteins. Modulates the activities of several proteins which are inactive in their acylated form. The protein is NAD-dependent protein deacylase of Leptospira interrogans serogroup Icterohaemorrhagiae serovar Lai (strain 56601).